Consider the following 172-residue polypeptide: Macro domain-containing protein lp_3408 (172 aa).

Residues 1 to 171 (MVEIKVIHGD…VFSTALAALT (171 aa)) form the Macro domain.

Belongs to the MacroD-type family.

The polypeptide is Macro domain-containing protein lp_3408 (Lactiplantibacillus plantarum (strain ATCC BAA-793 / NCIMB 8826 / WCFS1) (Lactobacillus plantarum)).